A 161-amino-acid chain; its full sequence is Endoribonuclease YbeY (161 aa).

Residues His-127, His-131, and His-137 each contribute to the Zn(2+) site.

It belongs to the endoribonuclease YbeY family. Zn(2+) serves as cofactor.

The protein localises to the cytoplasm. Functionally, single strand-specific metallo-endoribonuclease involved in late-stage 70S ribosome quality control and in maturation of the 3' terminus of the 16S rRNA. The chain is Endoribonuclease YbeY from Listeria innocua serovar 6a (strain ATCC BAA-680 / CLIP 11262).